The chain runs to 201 residues: MKLIVGLGNPGMQYQFTPHNLGFLAVDRIAEKYGIRVANRNCKALTGRGVIEGVDVVLAKPETYMNLSGASVQELVSELEIDGTKDMIVIYDDLDLPYGSIRVRERGSAGGHNGVQSIIGALDTQEFLRIRIGIAPEFKLSDGASYVLSQLKKSQLPVVDQALDDAAEAVKVILREGPGPAMNRFNRKPEPPESGGEVAAK.

Tyr14 lines the tRNA pocket. His19 functions as the Proton acceptor in the catalytic mechanism. TRNA is bound by residues Tyr64, Asn66, and Asn113. The segment at 178–201 is disordered; sequence PGPAMNRFNRKPEPPESGGEVAAK.

This sequence belongs to the PTH family. Monomer.

It localises to the cytoplasm. It catalyses the reaction an N-acyl-L-alpha-aminoacyl-tRNA + H2O = an N-acyl-L-amino acid + a tRNA + H(+). Hydrolyzes ribosome-free peptidyl-tRNAs (with 1 or more amino acids incorporated), which drop off the ribosome during protein synthesis, or as a result of ribosome stalling. Its function is as follows. Catalyzes the release of premature peptidyl moieties from peptidyl-tRNA molecules trapped in stalled 50S ribosomal subunits, and thus maintains levels of free tRNAs and 50S ribosomes. The chain is Peptidyl-tRNA hydrolase from Koribacter versatilis (strain Ellin345).